Consider the following 215-residue polypeptide: Cytochrome b6 (215 aa).

A helical transmembrane segment spans residues 32-52 (LFYCLGGITLTCFLIQVATGF). Heme c is bound at residue Cys35. 2 residues coordinate heme b: His86 and His100. 3 helical membrane-spanning segments follow: residues 90–110 (ASMM…TGGF), 116–136 (STWV…VTGY), and 186–206 (LHTF…FLMI). The heme b site is built by His187 and His202.

This sequence belongs to the cytochrome b family. PetB subfamily. In terms of assembly, the 4 large subunits of the cytochrome b6-f complex are cytochrome b6, subunit IV (17 kDa polypeptide, PetD), cytochrome f and the Rieske protein, while the 4 small subunits are PetG, PetL, PetM and PetN. The complex functions as a dimer. Heme b serves as cofactor. Requires heme c as cofactor.

The protein resides in the plastid. It localises to the chloroplast thylakoid membrane. Functionally, component of the cytochrome b6-f complex, which mediates electron transfer between photosystem II (PSII) and photosystem I (PSI), cyclic electron flow around PSI, and state transitions. The polypeptide is Cytochrome b6 (Bigelowiella natans (Pedinomonas minutissima)).